The primary structure comprises 208 residues: Glutathione S-transferase GstB (208 aa).

The GST N-terminal domain maps to 1–83 (MITLWGRNNS…YLAAQYGQKR (83 aa)). Residues Asn12, Asn39, Val53, and 67–68 (ES) each bind glutathione. Residues 88–208 (SPARRAEAEK…VRKVVMIPVS (121 aa)) enclose the GST C-terminal domain.

Belongs to the GST superfamily.

It catalyses the reaction RX + glutathione = an S-substituted glutathione + a halide anion + H(+). In terms of biological role, conjugation of reduced glutathione to a wide number of exogenous and endogenous hydrophobic electrophiles. In Escherichia coli O6:H1 (strain CFT073 / ATCC 700928 / UPEC), this protein is Glutathione S-transferase GstB (gstB).